The primary structure comprises 224 residues: 7-cyano-7-deazaguanine synthase 1 (224 aa).

Position 10-20 (10-20) interacts with ATP; it reads LSGGLDSMVCA. 4 residues coordinate Zn(2+): Cys189, Cys199, Cys202, and Cys205.

It belongs to the QueC family. The cofactor is Zn(2+).

It carries out the reaction 7-carboxy-7-deazaguanine + NH4(+) + ATP = 7-cyano-7-deazaguanine + ADP + phosphate + H2O + H(+). It functions in the pathway purine metabolism; 7-cyano-7-deazaguanine biosynthesis. Its function is as follows. Catalyzes the ATP-dependent conversion of 7-carboxy-7-deazaguanine (CDG) to 7-cyano-7-deazaguanine (preQ(0)). This Sphingopyxis alaskensis (strain DSM 13593 / LMG 18877 / RB2256) (Sphingomonas alaskensis) protein is 7-cyano-7-deazaguanine synthase 1.